Here is a 1771-residue protein sequence, read N- to C-terminus: Gag-Pro-Pol polyprotein (1771 aa).

A lipid anchor (N-myristoyl glycine; by host) is attached at glycine 2. The propeptide occupies alanine 101–leucine 161. Composition is skewed to polar residues over residues asparagine 113–proline 125 and lysine 140–threonine 152. A disordered region spans residues asparagine 113 to valine 178. The short motif at proline 202–tyrosine 205 is the PPXY motif element. The PTAP/PSAP motif signature appears at proline 210–proline 213. A coiled-coil region spans residues methionine 216–glutamate 257. Residues threonine 260–isoleucine 279 are disordered. Positions alanine 335–proline 338 match the PTAP/PSAP motif motif. 2 CCHC-type zinc fingers span residues glycine 547–glutamate 564 and glycine 576–serine 593. Residues lysine 592–leucine 626 form a disordered region. Residues phenylalanine 780 to leucine 856 form the Peptidase A2 domain. Residue aspartate 785 is the Protease; shared with dimeric partner of the active site. In terms of domain architecture, G-patch spans proline 867–threonine 913. In terms of domain architecture, Reverse transcriptase spans leucine 959–leucine 1147. Residues aspartate 1024, aspartate 1099, aspartate 1100, aspartate 1370, glutamate 1399, aspartate 1420, and aspartate 1484 each coordinate Mg(2+). The RNase H type-1 domain occupies leucine 1361–serine 1492. An Integrase-type zinc finger spans residues threonine 1496–valine 1537. Zn(2+) is bound by residues histidine 1505, histidine 1509, cysteine 1533, and cysteine 1536. Positions arginine 1550 to lysine 1719 constitute an Integrase catalytic domain. Residues aspartate 1561, aspartate 1618, and glutamate 1654 each contribute to the Mg(2+) site. A DNA-binding region (integrase-type) is located at residues alanine 1716–asparagine 1765.

It belongs to the retroviral Pol polyprotein family. As to quaternary structure, homodimer. In terms of assembly, interacts with the G-patch peptide. Interacts with the reverse transcriptase/ribonuclease H. As to quaternary structure, homotrimer. The cofactor is Mg(2+). Released by autocatalytic processing. The protease can undergo further autoprocessing to yield 2 shorter but enzymatically active forms of 12 kDa and 13 kDa. Post-translationally, myristoylated. Myristoylation of the matrix (MA) domain mediates the transport and binding of Gag polyproteins to the host plasma membrane and is required for the assembly of viral particles. In terms of processing, specific enzymatic cleavages in vivo yield mature proteins.

Its subcellular location is the virion. It catalyses the reaction DNA(n) + a 2'-deoxyribonucleoside 5'-triphosphate = DNA(n+1) + diphosphate. It carries out the reaction Endonucleolytic cleavage to 5'-phosphomonoester.. The enzyme catalyses dUTP + H2O = dUMP + diphosphate + H(+). Matrix protein. Its function is as follows. Nucleocapsid protein p14: Nucleocapsid protein. Functionally, capsid protein. In terms of biological role, the aspartyl protease mediates proteolytic cleavages of Gag and Gag-Pol polyproteins during or shortly after the release of the virion from the plasma membrane. Cleavages take place as an ordered, step-wise cascade to yield mature proteins. This process is called maturation. Displays maximal activity during the budding process just prior to particle release from the cell. Enhances the activity of the reverse transcriptase. May be part of the mature RT. Its function is as follows. RT is a multifunctional enzyme that converts the viral dimeric RNA genome into dsDNA in the cytoplasm, shortly after virus entry into the cell. This enzyme displays a DNA polymerase activity that can copy either DNA or RNA templates, and a ribonuclease H (RNase H) activity that cleaves the RNA strand of RNA-DNA heteroduplexes in a partially processive 3' to 5' endonucleasic mode. Conversion of viral genomic RNA into dsDNA requires many steps. A tRNA binds to the primer-binding site (PBS) situated at the 5' end of the viral RNA. RT uses the 3' end of the tRNA primer to perfom a short round of RNA-dependent minus-strand DNA synthesis. The reading proceeds through the U5 region and ends after the repeated (R) region which is present at both ends of viral RNA. The portion of the RNA-DNA heteroduplex is digested by the RNase H, resulting in a ssDNA product attached to the tRNA primer. This ssDNA/tRNA hybridizes with the identical R region situated at the 3' end of viral RNA. This template exchange, known as minus-strand DNA strong stop transfer, can be either intra- or intermolecular. RT uses the 3' end of this newly synthesized short ssDNA to perfom the RNA-dependent minus-strand DNA synthesis of the whole template. RNase H digests the RNA template except for a polypurine tract (PPT) situated at the 5' end of the genome. It is not clear if both polymerase and RNase H activities are simultaneous. RNase H probably can proceed both in a polymerase-dependent (RNA cut into small fragments by the same RT performing DNA synthesis) and a polymerase-independent mode (cleavage of remaining RNA fragments by free RTs). Secondly, RT performs DNA-directed plus-strand DNA synthesis using the PPT that has not been removed by RNase H as primers. PPT and tRNA primers are then removed by RNase H. The 3' and 5' ssDNA PBS regions hybridize to form a circular dsDNA intermediate. Strand displacement synthesis by RT to the PBS and PPT ends produces a blunt ended, linear dsDNA copy of the viral genome that includes long terminal repeats (LTRs) at both ends. Functionally, catalyzes viral DNA integration into the host chromosome, by performing a series of DNA cutting and joining reactions. This Macaca mulatta (Rhesus macaque) protein is Gag-Pro-Pol polyprotein (gag-pro-pol).